The following is a 167-amino-acid chain: Endoribonuclease YbeY (167 aa).

Residues His-131, His-135, and His-141 each contribute to the Zn(2+) site.

This sequence belongs to the endoribonuclease YbeY family. Requires Zn(2+) as cofactor.

It localises to the cytoplasm. Functionally, single strand-specific metallo-endoribonuclease involved in late-stage 70S ribosome quality control and in maturation of the 3' terminus of the 16S rRNA. The polypeptide is Endoribonuclease YbeY (Rickettsia akari (strain Hartford)).